The sequence spans 434 residues: Gamma-glutamyl phosphate reductase (434 aa).

The protein belongs to the gamma-glutamyl phosphate reductase family.

Its subcellular location is the cytoplasm. It carries out the reaction L-glutamate 5-semialdehyde + phosphate + NADP(+) = L-glutamyl 5-phosphate + NADPH + H(+). Its pathway is amino-acid biosynthesis; L-proline biosynthesis; L-glutamate 5-semialdehyde from L-glutamate: step 2/2. Functionally, catalyzes the NADPH-dependent reduction of L-glutamate 5-phosphate into L-glutamate 5-semialdehyde and phosphate. The product spontaneously undergoes cyclization to form 1-pyrroline-5-carboxylate. In Nostoc sp. (strain PCC 7120 / SAG 25.82 / UTEX 2576), this protein is Gamma-glutamyl phosphate reductase.